A 79-amino-acid polypeptide reads, in one-letter code: Acyl carrier protein (79 aa).

In terms of domain architecture, Carrier spans S2 to K77. S37 is subject to O-(pantetheine 4'-phosphoryl)serine.

Belongs to the acyl carrier protein (ACP) family. Post-translationally, 4'-phosphopantetheine is transferred from CoA to a specific serine of apo-ACP by AcpS. This modification is essential for activity because fatty acids are bound in thioester linkage to the sulfhydryl of the prosthetic group.

The protein localises to the cytoplasm. It participates in lipid metabolism; fatty acid biosynthesis. Its function is as follows. Carrier of the growing fatty acid chain in fatty acid biosynthesis. The chain is Acyl carrier protein from Acidiphilium cryptum (strain JF-5).